The following is a 646-amino-acid chain: Threonine--tRNA ligase (646 aa).

The TGS domain occupies 1 to 61 (MIKITFPDGS…NEDASVVLYK (61 aa)). The tract at residues 242 to 541 (DHRKIGKEMQ…LIEHTAGKFP (300 aa)) is catalytic. 3 residues coordinate Zn(2+): C337, H388, and H518.

It belongs to the class-II aminoacyl-tRNA synthetase family. Homodimer. Requires Zn(2+) as cofactor.

The protein localises to the cytoplasm. The catalysed reaction is tRNA(Thr) + L-threonine + ATP = L-threonyl-tRNA(Thr) + AMP + diphosphate + H(+). Functionally, catalyzes the attachment of threonine to tRNA(Thr) in a two-step reaction: L-threonine is first activated by ATP to form Thr-AMP and then transferred to the acceptor end of tRNA(Thr). Also edits incorrectly charged L-seryl-tRNA(Thr). The chain is Threonine--tRNA ligase from Bacteroides fragilis (strain YCH46).